The following is a 65-amino-acid chain: Weak toxin CM-13b (65 aa).

5 disulfides stabilise this stretch: C3–C24, C6–C11, C17–C42, C46–C57, and C58–C63.

The protein belongs to the three-finger toxin family. Ancestral subfamily. Orphan group II sub-subfamily. As to expression, expressed by the venom gland.

The protein resides in the secreted. Binds with low affinity to muscular (alpha-1-beta-1-delta-epsilon/CHRNA1-CHRNB1-CHRND-CHRNE) and very low affinity to neuronal (alpha-7/CHRNA7) nicotinic acetylcholine receptor (nAChR). In Naja annulifera (Banded Egyptian cobra), this protein is Weak toxin CM-13b.